A 459-amino-acid polypeptide reads, in one-letter code: Glycosyl hydrolase family 109 protein 1 (459 aa).

A signal peptide (tat-type signal) is located at residues 1-31; the sequence is MHNIHRRHFLKAAGAVTAGLVTANIALNANA. Residues 64-65, D86, 135-138, 155-156, and N184 each bind NAD(+); these read ER, WEWH, and EV. Residues Y213, R232, 244-247, and Y326 contribute to the substrate site; that span reads YPTH. Residue Y244 coordinates NAD(+).

It belongs to the Gfo/Idh/MocA family. Glycosyl hydrolase 109 subfamily. The cofactor is NAD(+). Post-translationally, predicted to be exported by the Tat system. The position of the signal peptide cleavage has not been experimentally proven.

Glycosidase. The polypeptide is Glycosyl hydrolase family 109 protein 1 (Shewanella sp. (strain MR-4)).